The primary structure comprises 299 residues: Coenzyme PQQ synthesis protein B (299 aa).

The protein belongs to the PqqB family.

It participates in cofactor biosynthesis; pyrroloquinoline quinone biosynthesis. Its function is as follows. May be involved in the transport of PQQ or its precursor to the periplasm. The protein is Coenzyme PQQ synthesis protein B of Methylobacterium sp. (strain 4-46).